The chain runs to 132 residues: Nuclear transition protein 2 (132 aa).

Positions 1–20 (MDTKTQSLPNTHAQPHSNSR) are enriched in polar residues. The interval 1–132 (MDTKTQSLPN…KRQSSGRKYN (132 aa)) is disordered. Zn(2+) is bound by residues His-12, His-16, His-24, Cys-29, Cys-31, and Cys-35. Positions 37–59 (SRSRSRSCRSRSSSRRPRSHRSP) are enriched in basic residues. Residues 82–94 (SHQCPSRPVTHSC) are compositionally biased toward polar residues. The short motif at 105–113 (GKVIKRKQV) is the Nuclear localization signal element. The span at 108–132 (IKRKQVKRSKQVYKRKRQSSGRKYN) shows a compositional bias: basic residues. Ser-127 is modified (phosphoserine).

This sequence belongs to the nuclear transition protein 2 family. Testis.

Its subcellular location is the nucleus. It localises to the nucleolus. The protein localises to the chromosome. Its function is as follows. Plays a key role in the replacement of histones to protamine in the elongating spermatids of mammals. In condensing spermatids, loaded onto the nucleosomes, where it promotes the recruitment and processing of protamines, which are responsible for histone eviction. In Bos taurus (Bovine), this protein is Nuclear transition protein 2 (TNP2).